Reading from the N-terminus, the 392-residue chain is Selenide, water dikinase 1 (392 aa).

The active site involves Cys-31. ATP-binding positions include Lys-32, 67–69 (GMD), Asp-87, Asp-110, and 161–164 (GGQT). Asp-69 is a Mg(2+) binding site. Position 110 (Asp-110) interacts with Mg(2+). Mg(2+) is bound at residue Asp-265.

It belongs to the selenophosphate synthase 1 family. Class II subfamily. In terms of assembly, homodimer. Mg(2+) serves as cofactor.

The protein resides in the cell membrane. It localises to the nucleus membrane. It carries out the reaction hydrogenselenide + ATP + H2O = selenophosphate + AMP + phosphate + 2 H(+). Synthesizes selenophosphate from selenide and ATP. The sequence is that of Selenide, water dikinase 1 (sephs1) from Xenopus laevis (African clawed frog).